The primary structure comprises 179 residues: CDP-archaeol synthase (179 aa).

Transmembrane regions (helical) follow at residues 53–73, 88–108, 120–140, and 145–165; these read FVGG…IEKL, FTLT…GSFI, FLIV…SLYP, and LFTA…HMGI.

It belongs to the CDP-archaeol synthase family. Mg(2+) serves as cofactor.

It localises to the cell membrane. The catalysed reaction is 2,3-bis-O-(geranylgeranyl)-sn-glycerol 1-phosphate + CTP + H(+) = CDP-2,3-bis-O-(geranylgeranyl)-sn-glycerol + diphosphate. The protein operates within membrane lipid metabolism; glycerophospholipid metabolism. In terms of biological role, catalyzes the formation of CDP-2,3-bis-(O-geranylgeranyl)-sn-glycerol (CDP-archaeol) from 2,3-bis-(O-geranylgeranyl)-sn-glycerol 1-phosphate (DGGGP) and CTP. This reaction is the third ether-bond-formation step in the biosynthesis of archaeal membrane lipids. Can use CTP or dCTP, but not ATP, GTP or TTP. The protein is CDP-archaeol synthase of Archaeoglobus fulgidus (strain ATCC 49558 / DSM 4304 / JCM 9628 / NBRC 100126 / VC-16).